The following is a 152-amino-acid chain: Ribonuclease H (152 aa).

Residues 1–142 (MDSKVVIYTD…ADKLAVQGRE (142 aa)) enclose the RNase H type-1 domain. Residues Asp-10, Glu-48, Asp-70, and Asp-134 each coordinate Mg(2+).

It belongs to the RNase H family. In terms of assembly, monomer. Requires Mg(2+) as cofactor.

It localises to the cytoplasm. It carries out the reaction Endonucleolytic cleavage to 5'-phosphomonoester.. Its function is as follows. Endonuclease that specifically degrades the RNA of RNA-DNA hybrids. The protein is Ribonuclease H of Rickettsia typhi (strain ATCC VR-144 / Wilmington).